A 298-amino-acid chain; its full sequence is 4-nitrophenylphosphatase (298 aa).

Homodimer. In terms of processing, the N-terminus is blocked.

It catalyses the reaction 4-nitrophenyl phosphate + H2O = 4-nitrophenol + phosphate + H(+). Its activity is regulated as follows. Activity enhanced by Mg(2+) ion but inhibited by Zn(2+) ion. In Schizosaccharomyces pombe (strain 972 / ATCC 24843) (Fission yeast), this protein is 4-nitrophenylphosphatase (pho2).